Here is a 55-residue protein sequence, read N- to C-terminus: Large ribosomal subunit protein bL33 (55 aa).

It belongs to the bacterial ribosomal protein bL33 family.

In Dinoroseobacter shibae (strain DSM 16493 / NCIMB 14021 / DFL 12), this protein is Large ribosomal subunit protein bL33.